Here is a 99-residue protein sequence, read N- to C-terminus: Small ribosomal subunit protein uS14c (99 aa).

Belongs to the universal ribosomal protein uS14 family. Part of the 30S ribosomal subunit.

It is found in the plastid. It localises to the chloroplast. Functionally, binds 16S rRNA, required for the assembly of 30S particles. The chain is Small ribosomal subunit protein uS14c from Welwitschia mirabilis (Tree tumbo).